Reading from the N-terminus, the 160-residue chain is Small ribosomal subunit protein uS19v (160 aa).

It belongs to the universal ribosomal protein uS19 family.

It is found in the cytoplasm. The sequence is that of Small ribosomal subunit protein uS19v (RPS15F) from Arabidopsis thaliana (Mouse-ear cress).